A 97-amino-acid chain; its full sequence is HssA/B-like protein 47 (97 aa).

A disordered region spans residues 1–33 (MTLFSSISSISNPMTSSKSSIASFGSGTSMSSN).

The protein belongs to the hssA/B family.

This is HssA/B-like protein 47 (hssl47) from Dictyostelium discoideum (Social amoeba).